The sequence spans 717 residues: Probable cyclic nucleotide-gated ion channel 5 (717 aa).

The Cytoplasmic portion of the chain corresponds to 1–102 (MAGKRENFVR…DKFLLYCNKL (102 aa)). The chain crosses the membrane as a helical span at residues 103–123 (FVASCILSVFVDPFFFYLPVI). At 124 to 136 (NAESKCLGIDRKL) the chain is on the extracellular side. Residues 137 to 157 (AITASTLRTFIDVFYLAHMAL) form a helical membrane-spanning segment. Topologically, residues 158–190 (QLRTAYIAPSSRVFGRGELVIDPAQIAKRYLQR) are cytoplasmic. A helical transmembrane segment spans residues 191–211 (WFIIDFLSVLPLPQIVVWRFL). Residues 212–224 (QSSNGSDVLATKQ) are Extracellular-facing. The chain crosses the membrane as a helical span at residues 225–245 (ALLFIVLVQYIPRFLRVLPLT). The Cytoplasmic portion of the chain corresponds to 246–265 (SELKRTAGVFAETAWAGAAY). Residues 266–286 (YLLLYMLASHIVGAFWYLLAL) traverse the membrane as a helical segment. Over 287 to 391 (ERNDACWQEA…GQGLETSTYP (105 aa)) the chain is Extracellular. A helical membrane pass occupies residues 392–412 (MEIIFSISLAISGLILFALLI). At 413–717 (GNMQTYLQSL…KPPEPDFTAD (305 aa)) the chain is on the cytoplasmic side. Residues 498-628 (LFKS…TFRF) and E569 each bind a nucleoside 3',5'-cyclic phosphate. The tract at residues 614 to 629 (FRRLHSRQVQHTFRFY) is calmodulin-binding. The IQ domain maps to 634–663 (RTWAACFIQAAWRRYCKRKKMEEAEAEAAA).

Belongs to the cyclic nucleotide-gated cation channel (TC 1.A.1.5) family. As to quaternary structure, homotetramer or heterotetramer.

It is found in the cell membrane. Functionally, probable cyclic nucleotide-gated ion channel. In Arabidopsis thaliana (Mouse-ear cress), this protein is Probable cyclic nucleotide-gated ion channel 5 (CNGC5).